We begin with the raw amino-acid sequence, 86 residues long: Cell division topological specificity factor (86 aa).

Belongs to the MinE family.

Functionally, prevents the cell division inhibition by proteins MinC and MinD at internal division sites while permitting inhibition at polar sites. This ensures cell division at the proper site by restricting the formation of a division septum at the midpoint of the long axis of the cell. This is Cell division topological specificity factor from Shewanella frigidimarina (strain NCIMB 400).